We begin with the raw amino-acid sequence, 153 residues long: Ribosome maturation factor RimP (153 aa).

Belongs to the RimP family.

It is found in the cytoplasm. Required for maturation of 30S ribosomal subunits. This chain is Ribosome maturation factor RimP, found in Coxiella burnetii (strain CbuK_Q154) (Coxiella burnetii (strain Q154)).